Here is a 109-residue protein sequence, read N- to C-terminus: T cell receptor alpha variable 26-2 (109 aa).

The N-terminal stretch at 1–19 is a signal peptide; it reads MKLVTSITVLLSLGIMGDA. An Ig-like domain is found at 20-109; that stretch reads KTTQPNSMES…AAVYYCILRD (90 aa). C39 and C105 are oxidised to a cystine. N-linked (GlcNAc...) asparagine glycosylation occurs at N40.

As to quaternary structure, alpha-beta TR is a heterodimer composed of an alpha and beta chain; disulfide-linked. The alpha-beta TR is associated with the transmembrane signaling CD3 coreceptor proteins to form the TR-CD3 (TcR or TCR). The assembly of alpha-beta TR heterodimers with CD3 occurs in the endoplasmic reticulum where a single alpha-beta TR heterodimer associates with one CD3D-CD3E heterodimer, one CD3G-CD3E heterodimer and one CD247 homodimer forming a stable octameric structure. CD3D-CD3E and CD3G-CD3E heterodimers preferentially associate with TR alpha and TR beta chains, respectively. The association of the CD247 homodimer is the last step of TcR assembly in the endoplasmic reticulum and is required for transport to the cell surface.

Its subcellular location is the cell membrane. In terms of biological role, v region of the variable domain of T cell receptor (TR) alpha chain that participates in the antigen recognition. Alpha-beta T cell receptors are antigen specific receptors which are essential to the immune response and are present on the cell surface of T lymphocytes. Recognize peptide-major histocompatibility (MH) (pMH) complexes that are displayed by antigen presenting cells (APC), a prerequisite for efficient T cell adaptive immunity against pathogens. Binding of alpha-beta TR to pMH complex initiates TR-CD3 clustering on the cell surface and intracellular activation of LCK that phosphorylates the ITAM motifs of CD3G, CD3D, CD3E and CD247 enabling the recruitment of ZAP70. In turn ZAP70 phosphorylates LAT, which recruits numerous signaling molecules to form the LAT signalosome. The LAT signalosome propagates signal branching to three major signaling pathways, the calcium, the mitogen-activated protein kinase (MAPK) kinase and the nuclear factor NF-kappa-B (NF-kB) pathways, leading to the mobilization of transcription factors that are critical for gene expression and essential for T cell growth and differentiation. The T cell repertoire is generated in the thymus, by V-(D)-J rearrangement. This repertoire is then shaped by intrathymic selection events to generate a peripheral T cell pool of self-MH restricted, non-autoaggressive T cells. Post-thymic interaction of alpha-beta TR with the pMH complexes shapes TR structural and functional avidity. In Homo sapiens (Human), this protein is T cell receptor alpha variable 26-2.